The chain runs to 193 residues: Major structural subunit of bundle-forming pilus (193 aa).

A propeptide spanning residues 1-13 is cleaved from the precursor; it reads MVSKIMNKKYEKG. An N-methylleucine modification is found at Leu-14. The helical transmembrane segment at 14-35 threads the bilayer; it reads LSLIESAMVLALAATVTAGVMF. A disulfide bond links Cys-129 and Cys-179.

It belongs to the N-Me-Phe pilin family. In terms of assembly, 10 to 100 laterally aligned filaments or bundle-forming pili coalesce into rope-like bundles. These form linkages between the bacteria within the enteropathogenic E.coli (EPEC) microcolonies that are attached to epithelial cells.

It is found in the fimbrium. Its subcellular location is the membrane. In terms of biological role, major repeating bundle-forming pilus (BFP) subunit. Is required for EPEC localized adherence. The protein is Major structural subunit of bundle-forming pilus (bfpA) of Escherichia coli O111:H-.